The following is a 324-amino-acid chain: Uric acid degradation bifunctional protein TTL (324 aa).

An N-acetylalanine modification is found at Ala-2. The required for BRI1-binding stretch occupies residues 2 to 29 (AMEIGEDEWKVCCGSSEFAKQMSTSGPL). The segment at 2-161 (AMEIGEDEWK…LRMAKLFSDK (160 aa)) is OHCU decarboxylase. His-58 functions as the Proton donor; for OHCU decarboxylase activity in the catalytic mechanism. Residues His-58, Pro-59, Glu-80, Phe-111, Ile-113, and Ala-115 each contribute to the (S)-allantoin site. The HIU hydrolase stretch occupies residues 178-324 (KPQDRLRIIG…PFSFSTYRGS (147 aa)). Positions 182–190 (RLRIIGGHL) match the Internal peroxisomal targeting signal (PTS2) motif.

It in the N-terminal section; belongs to the OHCU decarboxylase family. This sequence in the C-terminal section; belongs to the transthyretin family. 5-hydroxyisourate hydrolase subfamily. In terms of assembly, homodimer. Forms tetramers. Interacts with BRI1 in a kinase-dependent manner. Interacts with B1L. Phosphorylated by BRI1 in vitro. As to expression, expressed ubiquitously with highest levels in flowers buds and elongating inflorescences. Mainly expressed in stems and leaves, and, to a lower extent, in flowers, flower buds and seedlings. In terms of tissue distribution, strongly expressed in flower buds and leaves, to a lower extent in stems, and at low levels in seedlings and flowers.

It is found in the cell membrane. It localises to the peroxisome. The protein resides in the cytoplasm. The protein localises to the cytosol. It carries out the reaction 5-hydroxyisourate + H2O = 5-hydroxy-2-oxo-4-ureido-2,5-dihydro-1H-imidazole-5-carboxylate + H(+). It catalyses the reaction 5-hydroxy-2-oxo-4-ureido-2,5-dihydro-1H-imidazole-5-carboxylate + H(+) = (S)-allantoin + CO2. It functions in the pathway purine metabolism; urate degradation; (S)-allantoin from urate: step 2/3. Its pathway is purine metabolism; urate degradation; (S)-allantoin from urate: step 3/3. Functionally, involved in the last two steps of the degradation of uric acid, i.e. the hydrolysis of 5-hydroxyisourate (HIU) to 2-oxo-4-hydroxy-4-carboxy-5-ureidoimidazoline (OHCU) and its stereoselective decarboxylation to (S)-allantoin, a major ureide compound. Might function as a negative regulator to modulate brassinosteroid-mediated plant growth. Together with B1L, prevents plant growth and development, but by opposition to B1L, negatively regulates cold tolerance, probably in a brassinosteroid (BR) and allantoin-dependent manner. The polypeptide is Uric acid degradation bifunctional protein TTL (Arabidopsis thaliana (Mouse-ear cress)).